A 403-amino-acid polypeptide reads, in one-letter code: MWRFAVFLAAFFVQDVVGSHGDPELHMTTPQIIERWGYPAMIYTVATDDGYILEMHRIPFGKTNVTWPNGKRPVVFMQHGLLCASSDWVVNLPDQSAGFLFADAGFDVWLGNMRGNTYSMKHKDLKPSHSAFWDWSWDEMATYDLNAMINHVLEVTGQDSVYYMGHSQGTLTMFSHLSKDDGSFAKKIKKFFALAPIGSVKHIKGFLSFFANYFSLEFDGWFDIFGAGEFLPNNWAMKLAAKDICGGLKVEADLCDNVLFLIAGPESDQWNQTRVPVYATHDPAGTSTQNIVHWMQMVHHGGVPAYDWGTKTNKKKYGQANPPEYDFTAIKGTKIYLYWSDADWLADTPDVPDYLLTRLNPAIVAQNNHLPDYNHLDFTWGLRAPDDIYRPAIKLCTDDYLGK.

The signal sequence occupies residues 1-18; it reads MWRFAVFLAAFFVQDVVG. N-linked (GlcNAc...) asparagine glycosylation is present at Asn-64. The active-site Nucleophile is the Ser-167. Residue Asn-271 is glycosylated (N-linked (GlcNAc...) asparagine). Catalysis depends on charge relay system residues Asp-343 and His-375.

The protein belongs to the AB hydrolase superfamily. Lipase family.

Its subcellular location is the lysosome lumen. The protein localises to the secreted. Lipase involved in lipid homeostasis. Regulates mitochondrial lipid composition, in particular cardiolipins and coenzyme Q-9 levels, in response to nutrient availability. Does not affect global triglyceride levels in response to nutrient availability. However, in coelomocytes, specifically promotes triglyceride catabolism and lifespan extension in response to nutrient deprivation. The sequence is that of Lipase lipl-5 from Caenorhabditis elegans.